A 441-amino-acid polypeptide reads, in one-letter code: uncharacterized protein (441 aa).

Helical transmembrane passes span 62-82 (FLSL…FEIG), 88-108 (LILT…KLFG), 112-132 (IALT…IIAL), 154-174 (ALLH…LLVV), 192-212 (WMFF…YLLY), 224-244 (ALMI…GVAS), 247-267 (ANLS…YMVC), 312-332 (IVLF…ATFA), 335-355 (ISVM…IIFL), 363-383 (QGMW…NLLL), and 399-419 (ILCS…LLYA).

It localises to the membrane. This is an uncharacterized protein from Schizosaccharomyces pombe (strain 972 / ATCC 24843) (Fission yeast).